Reading from the N-terminus, the 162-residue chain is NAD(P)H-quinone oxidoreductase subunit N (162 aa).

Belongs to the complex I NdhN subunit family. In terms of assembly, NDH-1 can be composed of about 15 different subunits; different subcomplexes with different compositions have been identified which probably have different functions.

Its subcellular location is the cellular thylakoid membrane. The enzyme catalyses a plastoquinone + NADH + (n+1) H(+)(in) = a plastoquinol + NAD(+) + n H(+)(out). It catalyses the reaction a plastoquinone + NADPH + (n+1) H(+)(in) = a plastoquinol + NADP(+) + n H(+)(out). Its function is as follows. NDH-1 shuttles electrons from an unknown electron donor, via FMN and iron-sulfur (Fe-S) centers, to quinones in the respiratory and/or the photosynthetic chain. The immediate electron acceptor for the enzyme in this species is believed to be plastoquinone. Couples the redox reaction to proton translocation, and thus conserves the redox energy in a proton gradient. Cyanobacterial NDH-1 also plays a role in inorganic carbon-concentration. In Trichormus variabilis (strain ATCC 29413 / PCC 7937) (Anabaena variabilis), this protein is NAD(P)H-quinone oxidoreductase subunit N.